The following is a 631-amino-acid chain: Phosphomethylpyrimidine synthase (631 aa).

Substrate-binding positions include Asn-239, Met-268, Tyr-297, His-333, 353–355, 394–397, and Glu-433; these read SRG and DGLR. His-437 is a binding site for Zn(2+). A substrate-binding site is contributed by Tyr-460. Residue His-501 participates in Zn(2+) binding. The [4Fe-4S] cluster site is built by Cys-581, Cys-584, and Cys-589.

The protein belongs to the ThiC family. In terms of assembly, homodimer. [4Fe-4S] cluster serves as cofactor.

It carries out the reaction 5-amino-1-(5-phospho-beta-D-ribosyl)imidazole + S-adenosyl-L-methionine = 4-amino-2-methyl-5-(phosphooxymethyl)pyrimidine + CO + 5'-deoxyadenosine + formate + L-methionine + 3 H(+). It participates in cofactor biosynthesis; thiamine diphosphate biosynthesis. Functionally, catalyzes the synthesis of the hydroxymethylpyrimidine phosphate (HMP-P) moiety of thiamine from aminoimidazole ribotide (AIR) in a radical S-adenosyl-L-methionine (SAM)-dependent reaction. In Salmonella paratyphi A (strain AKU_12601), this protein is Phosphomethylpyrimidine synthase.